An 836-amino-acid chain; its full sequence is MGYTIKQKIGICLKAEANPEMTQSDLALWAMKEYNSERPPSQTTISRILNSKNDIISRKESEFELIRRRKRANPLLRRILTEWITQANWEGIPITTPIIQSTANAIWTRLPKEGQEGNGIFNQKWCSHFVKKLNINITGSPRDVLDNRGYNLNKVWKLDEILELKRYLRDIIDQEDYAPQDVFVIDDFQLFYSLPLDQIFDVSSIDKGIKQSNSSAEHSLTIMLGCNIDGSEKLTPIIVGKYDKFDVSKSTHVSLNSMQFDSVSYQTLMNKLTEVYNIFYKSNTNKWITSSMFQNYLTRLDHKLSNSRPNGRKILIILDDCSSHRIINLKFNNIRLCYLKNEANHKNPYNTTYSGIKFDYLPMNFGIVEEFKILYRLQQYLEMINLQRSKSQIDSDPMIEENLTSTSVATTATALEVLSESDYHISLIRAIEWITRSWHSVSSERIFSSWKKTHLFNLLDWPSGNSGQLVYLNQKLNTFDENKSLKKLKEVMSYLNVVIPWEIDELVGLVNERGKVTLSYASIEEIIDSCLSEPVDDYDEMGDDDGRFDNRKNELGDVSSVPVDNSNDPWFTVSEINEFHNDPFYNNDKSIDAAAEPLESISPDNDSSAIPGLETKALSAISGLGTTSTSVVSDSPSGTTQKYNNISTYPNGSLKHKLGVLENWNRKRGPGQGQGQGQELQNPQGQQQQEQQQQQQHQMSGYNFSPISNIESPIASGGLTNPNVQFGNGAGSFDNQTPLFMNSLTSPPPPPPVPVPVPVPVPSVPSQVPATSFPQDVSSSRAVRAPMSTAAVDVDMATAITKLLEYSASNTLKLSQSTIDDLDYNLRVIRARLNQR.

Positions 64 to 139 (ELIRRRKRAN…VKKLNINITG (76 aa)) constitute an HTH CENPB-type domain. The segment covering 626-640 (TTSTSVVSDSPSGTT) has biased composition (low complexity). The interval 626–732 (TTSTSVVSDS…NVQFGNGAGS (107 aa)) is disordered. Polar residues predominate over residues 641 to 651 (QKYNNISTYPN). Over residues 677–698 (GQELQNPQGQQQQEQQQQQQHQ) the composition is skewed to low complexity. Polar residues predominate over residues 699-711 (MSGYNFSPISNIE).

Its function is as follows. Essential for the synthesis of pyruvate decarboxylase. In Candida albicans (Yeast), this protein is Protein PDC2 (PDC2).